The following is a 540-amino-acid chain: Probable G-protein coupled receptor 75 (540 aa).

Residues 1 to 46 (MNTSAPLQNVPNATLLNMPPLHGGNSTSLQEGLRDFIHTATLVTCT) are Extracellular-facing. N2 and N25 each carry an N-linked (GlcNAc...) asparagine glycan. A helical transmembrane segment spans residues 47–67 (FLLAIIFCLGSYGNFIVFLSF). Over 68 to 86 (FDPSFRKFRTNFDFMILNL) the chain is Cytoplasmic. The chain crosses the membrane as a helical span at residues 87 to 107 (SFCDLFICGVTAPMFTFVLFF). Over 108-120 (SSASSIPDSFCFT) the chain is Extracellular. A helical transmembrane segment spans residues 121–141 (FHLTSSGFVIMSLKMVAVIAL). The Cytoplasmic portion of the chain corresponds to 142–160 (HRLRMVMGKQPNCTASFSC). The chain crosses the membrane as a helical span at residues 161-181 (ILLLTLLLWATSFTLATLATL). Topologically, residues 182–205 (RTNKSHLCLPMSSLMDGEGKAILS) are extracellular. N184 is a glycosylation site (N-linked (GlcNAc...) asparagine). The helical transmembrane segment at 206 to 226 (LYVVDFTFCVAVVSVSYIMIA) threads the bilayer. At 227-318 (QTLRKNAQVK…INFSTAKDSK (92 aa)) the chain is on the cytoplasmic side. Residues 319 to 339 (AVVTCVVIVLSVLVCCLPLGI) traverse the membrane as a helical segment. Residues 340–350 (SLVQMVLSDNG) lie on the Extracellular side of the membrane. Residues 351-371 (SFILYQFELFGFTLIFFKSGL) form a helical membrane-spanning segment. At 372 to 540 (NPFIYSRNSA…SAKQIPIPSV (169 aa)) the chain is on the cytoplasmic side. The interval 443 to 475 (DQACGPSHSKESAASPKVSAGHQPCGQSSSTPI) is disordered.

The protein belongs to the G-protein coupled receptor 1 family. Highly expressed in brain and heart. Also detected in skeletal muscle, liver and kidney. Also expressed by islet cells (at protein level).

The protein resides in the cell membrane. Its function is as follows. G protein-coupled receptor that is activated by the chemokine CCL5/RANTES. Probably coupled to heterotrimeric Gq proteins, it stimulates inositol trisphosphate production and calcium mobilization upon activation. Together with CCL5/RANTES, may play a role in neuron survival through activation of a downstream signaling pathway involving the PI3, Akt and MAP kinases. CCL5/RANTES may also regulate insulin secretion by pancreatic islet cells through activation of this receptor. This chain is Probable G-protein coupled receptor 75 (Gpr75), found in Mus musculus (Mouse).